A 108-amino-acid chain; its full sequence is Glutaredoxin 4 (108 aa).

The 103-residue stretch at 5-107 folds into the Glutaredoxin domain; the sequence is IKKIQNQIQN…KTISICDKLN (103 aa). Lys-22 contributes to the glutathione binding site. [2Fe-2S] cluster is bound at residue Cys-30. Glutathione-binding positions include Arg-59, Phe-71, and 84-85; that span reads CN.

The protein belongs to the glutaredoxin family. Monothiol subfamily. Homodimer.

Its subcellular location is the cytoplasm. In terms of biological role, monothiol glutaredoxin involved in the biogenesis of iron-sulfur clusters. The sequence is that of Glutaredoxin 4 (grxD) from Buchnera aphidicola subsp. Baizongia pistaciae (strain Bp).